A 1755-amino-acid chain; its full sequence is Transposon Ty1-DR1 Gag-Pol polyprotein (1755 aa).

Polar residues-rich tracts occupy residues 1-10 (MESQQLSNYP), 48-60 (TKAN…TPAS), and 127-152 (QSQF…GNTF). Disordered stretches follow at residues 1–93 (MESQ…MMTQ), 126–173 (PQSQ…RPPP), and 352–421 (GSRN…SKST). The span at 153–165 (TDSSSADSDMTST) shows a compositional bias: low complexity. Residues 299 to 401 (NNGIHINNKV…NSKSKTARAH (103 aa)) form an RNA-binding region. Positions 402 to 418 (NVSTSNNSPSTDNDSIS) are enriched in low complexity. Phosphoserine is present on S416. D461 (for protease activity; shared with dimeric partner) is an active-site residue. The integrase-type zinc finger-like stretch occupies residues 583–640 (NVHTSESTRKYPYPFIHRMLAHANAQTIRYSLKNNTITYFNESDVDWSSAIDYQCPDC). The Integrase catalytic domain maps to 660–835 (NSYEPFQYLH…AGLDISTLLP (176 aa)). 2 residues coordinate Mg(2+): D671 and D736. Disordered regions lie at residues 956 to 1087 (SKAV…ETEK), 1092 to 1111 (RSPS…NIVP), and 1130 to 1187 (DLPL…DNET). Residues 960 to 969 (SPTDSTPPST) show a composition bias toward low complexity. Polar residues predominate over residues 1005-1015 (STPQISNIEST). Over residues 1038–1053 (ESSHASKSKDFRHSDS) the composition is skewed to basic and acidic residues. 2 stretches are compositionally biased toward polar residues: residues 1054–1082 (YSEN…QISD) and 1101–1111 (PENNSSHNIVP). The Bipartite nuclear localization signal motif lies at 1178-1212 (KKRSLEDNETEIKVSRDTWNTKNMRSLEPPRSKKR). The 139-residue stretch at 1338–1476 (NNYYITQLDI…DILGLEIKYQ (139 aa)) folds into the Reverse transcriptase Ty1/copia-type domain. Mg(2+)-binding residues include D1346, D1427, D1428, D1610, E1652, and D1685. The RNase H Ty1/copia-type domain maps to 1610-1752 (DASYGNQPYY…IKTFKLLTNK (143 aa)).

As to quaternary structure, the capsid protein forms a homotrimer, from which the VLPs are assembled. The protease is a homodimer, whose active site consists of two apposed aspartic acid residues. In terms of processing, initially, virus-like particles (VLPs) are composed of the structural unprocessed proteins Gag and Gag-Pol, and also contain the host initiator methionine tRNA (tRNA(i)-Met) which serves as a primer for minus-strand DNA synthesis, and a dimer of genomic Ty RNA. Processing of the polyproteins occurs within the particle and proceeds by an ordered pathway, called maturation. First, the protease (PR) is released by autocatalytic cleavage of the Gag-Pol polyprotein yielding capsid protein p45 and a Pol-p154 precursor protein. This cleavage is a prerequisite for subsequent processing of Pol-p154 at the remaining sites to release the mature structural and catalytic proteins. Maturation takes place prior to the RT reaction and is required to produce transposition-competent VLPs.

It localises to the cytoplasm. Its subcellular location is the nucleus. It carries out the reaction DNA(n) + a 2'-deoxyribonucleoside 5'-triphosphate = DNA(n+1) + diphosphate. The catalysed reaction is Endonucleolytic cleavage to 5'-phosphomonoester.. Capsid protein (CA) is the structural component of the virus-like particle (VLP), forming the shell that encapsulates the retrotransposons dimeric RNA genome. The particles are assembled from trimer-clustered units and there are holes in the capsid shells that allow for the diffusion of macromolecules. CA also has nucleocapsid-like chaperone activity, promoting primer tRNA(i)-Met annealing to the multipartite primer-binding site (PBS), dimerization of Ty1 RNA and initiation of reverse transcription. Functionally, the aspartyl protease (PR) mediates the proteolytic cleavages of the Gag and Gag-Pol polyproteins after assembly of the VLP. Its function is as follows. Reverse transcriptase/ribonuclease H (RT) is a multifunctional enzyme that catalyzes the conversion of the retro-elements RNA genome into dsDNA within the VLP. The enzyme displays a DNA polymerase activity that can copy either DNA or RNA templates, and a ribonuclease H (RNase H) activity that cleaves the RNA strand of RNA-DNA heteroduplexes during plus-strand synthesis and hydrolyzes RNA primers. The conversion leads to a linear dsDNA copy of the retrotransposon that includes long terminal repeats (LTRs) at both ends. In terms of biological role, integrase (IN) targets the VLP to the nucleus, where a subparticle preintegration complex (PIC) containing at least integrase and the newly synthesized dsDNA copy of the retrotransposon must transit the nuclear membrane. Once in the nucleus, integrase performs the integration of the dsDNA into the host genome. The sequence is that of Transposon Ty1-DR1 Gag-Pol polyprotein (TY1B-DR1) from Saccharomyces cerevisiae (strain ATCC 204508 / S288c) (Baker's yeast).